The sequence spans 147 residues: UPF0179 protein NP_3406A (147 aa).

The protein belongs to the UPF0179 family.

This chain is UPF0179 protein NP_3406A, found in Natronomonas pharaonis (strain ATCC 35678 / DSM 2160 / CIP 103997 / JCM 8858 / NBRC 14720 / NCIMB 2260 / Gabara) (Halobacterium pharaonis).